A 150-amino-acid chain; its full sequence is Arginine repressor (150 aa).

It belongs to the ArgR family.

It is found in the cytoplasm. It participates in amino-acid biosynthesis; L-arginine biosynthesis [regulation]. In terms of biological role, regulates arginine biosynthesis genes. The protein is Arginine repressor of Carboxydothermus hydrogenoformans (strain ATCC BAA-161 / DSM 6008 / Z-2901).